The following is a 109-amino-acid chain: Large ribosomal subunit protein uL22 (109 aa).

Belongs to the universal ribosomal protein uL22 family. In terms of assembly, part of the 50S ribosomal subunit.

This protein binds specifically to 23S rRNA; its binding is stimulated by other ribosomal proteins, e.g. L4, L17, and L20. It is important during the early stages of 50S assembly. It makes multiple contacts with different domains of the 23S rRNA in the assembled 50S subunit and ribosome. Functionally, the globular domain of the protein is located near the polypeptide exit tunnel on the outside of the subunit, while an extended beta-hairpin is found that lines the wall of the exit tunnel in the center of the 70S ribosome. This is Large ribosomal subunit protein uL22 from Bordetella petrii (strain ATCC BAA-461 / DSM 12804 / CCUG 43448).